The following is a 385-amino-acid chain: Galactokinase (385 aa).

34–37 is a substrate binding site; sequence EHTD. 124–130 provides a ligand contact to ATP; that stretch reads SSGLSSS. Mg(2+) is bound by residues serine 130 and glutamate 162. Aspartate 174 acts as the Proton acceptor in catalysis. Residue tyrosine 223 coordinates substrate.

It belongs to the GHMP kinase family. GalK subfamily.

The protein resides in the cytoplasm. The catalysed reaction is alpha-D-galactose + ATP = alpha-D-galactose 1-phosphate + ADP + H(+). It functions in the pathway carbohydrate metabolism; galactose metabolism. Functionally, catalyzes the transfer of the gamma-phosphate of ATP to D-galactose to form alpha-D-galactose-1-phosphate (Gal-1-P). This is Galactokinase from Actinobacillus succinogenes (strain ATCC 55618 / DSM 22257 / CCUG 43843 / 130Z).